The primary structure comprises 409 residues: Dual-specificity RNA methyltransferase RlmN (409 aa).

Residue E126 is the Proton acceptor of the active site. The 242-residue stretch at 132 to 373 (EEGRGTLCLS…NQAGYASPIR (242 aa)) folds into the Radical SAM core domain. An intrachain disulfide couples C139 to C384. Residues C146, C150, and C153 each contribute to the [4Fe-4S] cluster site. Residues 210–211 (GE), S242, 264–266 (SLH), and N341 contribute to the S-adenosyl-L-methionine site. Catalysis depends on C384, which acts as the S-methylcysteine intermediate.

The protein belongs to the radical SAM superfamily. RlmN family. Requires [4Fe-4S] cluster as cofactor.

It is found in the cytoplasm. It carries out the reaction adenosine(2503) in 23S rRNA + 2 reduced [2Fe-2S]-[ferredoxin] + 2 S-adenosyl-L-methionine = 2-methyladenosine(2503) in 23S rRNA + 5'-deoxyadenosine + L-methionine + 2 oxidized [2Fe-2S]-[ferredoxin] + S-adenosyl-L-homocysteine. The catalysed reaction is adenosine(37) in tRNA + 2 reduced [2Fe-2S]-[ferredoxin] + 2 S-adenosyl-L-methionine = 2-methyladenosine(37) in tRNA + 5'-deoxyadenosine + L-methionine + 2 oxidized [2Fe-2S]-[ferredoxin] + S-adenosyl-L-homocysteine. Functionally, specifically methylates position 2 of adenine 2503 in 23S rRNA and position 2 of adenine 37 in tRNAs. m2A2503 modification seems to play a crucial role in the proofreading step occurring at the peptidyl transferase center and thus would serve to optimize ribosomal fidelity. This chain is Dual-specificity RNA methyltransferase RlmN, found in Bartonella quintana (strain Toulouse) (Rochalimaea quintana).